The following is a 191-amino-acid chain: Peptidyl-tRNA hydrolase (191 aa).

Tyrosine 14 is a tRNA binding site. The Proton acceptor role is filled by histidine 19. 3 residues coordinate tRNA: phenylalanine 64, asparagine 66, and asparagine 113.

It belongs to the PTH family. In terms of assembly, monomer.

It localises to the cytoplasm. The catalysed reaction is an N-acyl-L-alpha-aminoacyl-tRNA + H2O = an N-acyl-L-amino acid + a tRNA + H(+). Its function is as follows. Hydrolyzes ribosome-free peptidyl-tRNAs (with 1 or more amino acids incorporated), which drop off the ribosome during protein synthesis, or as a result of ribosome stalling. Functionally, catalyzes the release of premature peptidyl moieties from peptidyl-tRNA molecules trapped in stalled 50S ribosomal subunits, and thus maintains levels of free tRNAs and 50S ribosomes. The chain is Peptidyl-tRNA hydrolase from Fusobacterium nucleatum subsp. nucleatum (strain ATCC 25586 / DSM 15643 / BCRC 10681 / CIP 101130 / JCM 8532 / KCTC 2640 / LMG 13131 / VPI 4355).